The following is a 218-amino-acid chain: Adenylate kinase (218 aa).

10-15 (GAGKGT) contacts ATP. The segment at 30 to 59 (STGDMFRAAMADQTDLGVKAKAFIDKGELV) is NMP. AMP-binding positions include Thr31, Arg36, 57–59 (ELV), 85–88 (GFPR), and Gln92. Residues 126-164 (GRFICKTCGATYHKLYHPTQVEGTCDRCGGHVFFQREDD) form an LID region. ATP is bound at residue Arg127. Residues Cys130 and Cys133 each contribute to the Zn(2+) site. 136-137 (TY) contributes to the ATP binding site. Zn(2+)-binding residues include Cys150 and Cys153. AMP-binding residues include Arg161 and Arg172. Gln200 serves as a coordination point for ATP.

Belongs to the adenylate kinase family. In terms of assembly, monomer.

The protein resides in the cytoplasm. The catalysed reaction is AMP + ATP = 2 ADP. The protein operates within purine metabolism; AMP biosynthesis via salvage pathway; AMP from ADP: step 1/1. In terms of biological role, catalyzes the reversible transfer of the terminal phosphate group between ATP and AMP. Plays an important role in cellular energy homeostasis and in adenine nucleotide metabolism. The polypeptide is Adenylate kinase (Latilactobacillus sakei subsp. sakei (strain 23K) (Lactobacillus sakei subsp. sakei)).